We begin with the raw amino-acid sequence, 521 residues long: Occludin (521 aa).

Residues 1–66 (MSSRPFESPP…KWTSPPGVIR (66 aa)) are Cytoplasmic-facing. In terms of domain architecture, MARVEL spans 60-268 (SPPGVIRILS…IIFFAVKTRR (209 aa)). A helical membrane pass occupies residues 67–89 (ILSMLVIVMCIAIFGCVASTLAW). Topologically, residues 90-134 (DRGYGTGLMGGSIGYPYGSGFGSYGTGYGYGFGYGYGYGGYTDPR) are extracellular. The helical transmembrane segment at 135-159 (AAKGFLLAMVAFCFIAALVIFVTSV) threads the bilayer. Topologically, residues 160 to 169 (IRSDISRTRR) are cytoplasmic. A helical membrane pass occupies residues 170 to 194 (YYLTVIILSAFLGVMMFIATIVYIM). The Extracellular portion of the chain corresponds to 195–242 (GVNPTAQASGSLYSSQIYAMCNQFYASTATGLYMDQYLYHYCVVDPQE). Cysteines 215 and 236 form a disulfide. A helical transmembrane segment spans residues 243–264 (AIAIVLGFMVIVAFALIIFFAV). At 265-521 (KTRRKMDRYD…MVGDYDRQKT (257 aa)) the chain is on the cytoplasmic side. A Phosphoserine modification is found at Ser-301. Residues 301 to 407 (SAGTQDMPPP…ETDYTTGGES (107 aa)) are disordered. Position 304 is a phosphothreonine (Thr-304). Phosphoserine occurs at positions 312, 320, and 339. Tyr-367 carries the post-translational modification Phosphotyrosine. Phosphoserine occurs at positions 368 and 369. A compositionally biased stretch (basic residues) spans 380–389 (APSKGRTGRP). Over residues 390–399 (KRLEQDHYET) the composition is skewed to basic and acidic residues. Phosphotyrosine occurs at positions 397 and 401. 2 positions are modified to phosphothreonine; by PKC/PRKCH: Thr-402 and Thr-403. Residue Ser-407 is modified to Phosphoserine. The 109-residue stretch at 413–521 (EDWIREYPPI…MVGDYDRQKT (109 aa)) folds into the OCEL domain. Positions 424–488 (SDQQRQLYKR…EYNRLKQVKG (65 aa)) form a coiled coil. Ser-489 carries the post-translational modification Phosphoserine.

The protein belongs to the ELL/occludin family. In terms of assembly, interacts with TJP1/ZO1. Interacts with VAPA. Interacts with CLDN1, CLDN6, CLDN9, CLDN11, CLDN12 and CLDN17. Interacts with PLSCR1. Interacts with LSR, ILDR1 and ILDR2. Interacts with TJP2/ZO2. Dephosphorylated by PTPRJ. Less-phosphorylated forms are found in basolateral membrane, cytosol and tight junction. More-heavily phosphorylated forms are concentrated exclusively in tight junction. As to expression, localized at tight junctions of both epithelial and endothelial cells.

The protein resides in the cell membrane. Its subcellular location is the cell junction. It is found in the tight junction. May play a role in the formation and regulation of the tight junction (TJ) paracellular permeability barrier. Interacts with ZO-1. The sequence is that of Occludin (OCLN) from Canis lupus familiaris (Dog).